The following is a 483-amino-acid chain: MTAAVTENNGAGSGSSVAGRVVRVIGPVVDVEFPRGAIPELFNALHAEITLPSVAKTLTLEVAQHLGDNLVRTVSMQPTDGLIRGTSVSDTGKPISVPVGDVVKGHVFNALGDCLDAPGTGRDGEQWGIHRKPPAFDQLEGKTEILETGIKVIDLLTPYVKGGKIGLFGGAGVGKTVLIQEMITRIAREFSGTSVFAGVGERTREGTDLHLEMEEMGVLQDTALVFGQMDEPPGTRMRVALSALTMAEYFRDVQGQDVLLFIDNIFRFTQAGSEVSTLLGRMPSAVGYQPTLADEMGELQERITSTRGRSITSLQAIYVPADDYTDPAPATTFAHLDATTELSRPISQMGIYPAVDPLTSTSRILEPGIVGAEHFRVANEVKRILQKYKELQDIIAILGMDELQEEDKVLVGRARRLQKFLGQNFIVAEKFTGEPGSVVPLRDTIEAFDRICKGEFDHLPEQAFNSCGGLDDVEAAAKKIAGK.

Residue 169–176 coordinates ATP; sequence GGAGVGKT.

This sequence belongs to the ATPase alpha/beta chains family. In terms of assembly, F-type ATPases have 2 components, CF(1) - the catalytic core - and CF(0) - the membrane proton channel. CF(1) has five subunits: alpha(3), beta(3), gamma(1), delta(1), epsilon(1). CF(0) has three main subunits: a(1), b(2) and c(9-12). The alpha and beta chains form an alternating ring which encloses part of the gamma chain. CF(1) is attached to CF(0) by a central stalk formed by the gamma and epsilon chains, while a peripheral stalk is formed by the delta and b chains.

It is found in the cell membrane. The catalysed reaction is ATP + H2O + 4 H(+)(in) = ADP + phosphate + 5 H(+)(out). In terms of biological role, produces ATP from ADP in the presence of a proton gradient across the membrane. The catalytic sites are hosted primarily by the beta subunits. The sequence is that of ATP synthase subunit beta from Rhodococcus jostii (strain RHA1).